We begin with the raw amino-acid sequence, 192 residues long: Ribose 1,5-bisphosphate phosphokinase PhnN (192 aa).

ATP is bound at residue 15–22; that stretch reads GPSGAGKD.

Belongs to the ribose 1,5-bisphosphokinase family.

It catalyses the reaction alpha-D-ribose 1,5-bisphosphate + ATP = 5-phospho-alpha-D-ribose 1-diphosphate + ADP. Its pathway is metabolic intermediate biosynthesis; 5-phospho-alpha-D-ribose 1-diphosphate biosynthesis; 5-phospho-alpha-D-ribose 1-diphosphate from D-ribose 5-phosphate (route II): step 3/3. In terms of biological role, catalyzes the phosphorylation of ribose 1,5-bisphosphate to 5-phospho-D-ribosyl alpha-1-diphosphate (PRPP). This Brucella melitensis biotype 2 (strain ATCC 23457) protein is Ribose 1,5-bisphosphate phosphokinase PhnN.